A 197-amino-acid chain; its full sequence is Putative peptidyl-prolyl cis-trans isomerase (197 aa).

A PPIase cyclophilin-type domain is found at 14–195; that stretch reads GEIKVVMHTN…HDVVIESIDV (182 aa).

This sequence belongs to the cyclophilin-type PPIase family.

The catalysed reaction is [protein]-peptidylproline (omega=180) = [protein]-peptidylproline (omega=0). Functionally, PPIases accelerate the folding of proteins. It catalyzes the cis-trans isomerization of proline imidic peptide bonds in oligopeptides. In Staphylococcus aureus (strain bovine RF122 / ET3-1), this protein is Putative peptidyl-prolyl cis-trans isomerase.